A 245-amino-acid chain; its full sequence is DNA polymerase zeta processivity subunit (245 aa).

The HORMA domain maps to 3 to 203; the sequence is RWVEKWLRVY…PPKIKLTSLV (201 aa).

Belongs to the MAD2 family. As to quaternary structure, forms DNA polymerase zeta with REV3. Interacts with REV1.

It is found in the mitochondrion. In terms of biological role, required for DNA damage induced mutagenesis. Involved in DNA repair, mitochondrial DNA repair and translesion synthesis. Has a role in the bypass of abasic (AP) sites. This chain is DNA polymerase zeta processivity subunit (REV7), found in Saccharomyces cerevisiae (strain ATCC 204508 / S288c) (Baker's yeast).